The primary structure comprises 95 residues: Small ribosomal subunit protein uS17 (95 aa).

Belongs to the universal ribosomal protein uS17 family. Part of the 30S ribosomal subunit.

In terms of biological role, one of the primary rRNA binding proteins, it binds specifically to the 5'-end of 16S ribosomal RNA. In Synechococcus sp. (strain CC9902), this protein is Small ribosomal subunit protein uS17.